The chain runs to 458 residues: ATP synthase subunit beta (458 aa).

Residue 148–155 (GGAGVGKT) participates in ATP binding.

This sequence belongs to the ATPase alpha/beta chains family. F-type ATPases have 2 components, CF(1) - the catalytic core - and CF(0) - the membrane proton channel. CF(1) has five subunits: alpha(3), beta(3), gamma(1), delta(1), epsilon(1). CF(0) has three main subunits: a(1), b(2) and c(9-12). The alpha and beta chains form an alternating ring which encloses part of the gamma chain. CF(1) is attached to CF(0) by a central stalk formed by the gamma and epsilon chains, while a peripheral stalk is formed by the delta and b chains.

Its subcellular location is the cell inner membrane. The enzyme catalyses ATP + H2O + 4 H(+)(in) = ADP + phosphate + 5 H(+)(out). Functionally, produces ATP from ADP in the presence of a proton gradient across the membrane. The catalytic sites are hosted primarily by the beta subunits. The polypeptide is ATP synthase subunit beta (Pseudomonas fluorescens (strain ATCC BAA-477 / NRRL B-23932 / Pf-5)).